Consider the following 365-residue polypeptide: Chorismate synthase (365 aa).

The NADP(+) site is built by Arg-48 and Arg-54. FMN is bound by residues 129-131 (RSS), 241-242 (NA), Gly-285, 300-304 (KPTSS), and Arg-326.

This sequence belongs to the chorismate synthase family. Homotetramer. Requires FMNH2 as cofactor.

It catalyses the reaction 5-O-(1-carboxyvinyl)-3-phosphoshikimate = chorismate + phosphate. It functions in the pathway metabolic intermediate biosynthesis; chorismate biosynthesis; chorismate from D-erythrose 4-phosphate and phosphoenolpyruvate: step 7/7. Functionally, catalyzes the anti-1,4-elimination of the C-3 phosphate and the C-6 proR hydrogen from 5-enolpyruvylshikimate-3-phosphate (EPSP) to yield chorismate, which is the branch point compound that serves as the starting substrate for the three terminal pathways of aromatic amino acid biosynthesis. This reaction introduces a second double bond into the aromatic ring system. This chain is Chorismate synthase, found in Parvibaculum lavamentivorans (strain DS-1 / DSM 13023 / NCIMB 13966).